Reading from the N-terminus, the 246-residue chain is E3 ubiquitin-protein ligase LubX (246 aa).

2 U-box domains span residues 36 to 109 (TTPT…QTNY) and 131 to 204 (EIPD…RKRE).

As to quaternary structure, interacts with host CLK1. Post-translationally, ubiquitinated in the presence of host E1 ubiquitin-activating enzyme, E2 ubiquitin-conjugating enzyme (UBE2D1 or UBE2D3) and ubiquitin.

It localises to the secreted. The protein resides in the host cell. It carries out the reaction S-ubiquitinyl-[E2 ubiquitin-conjugating enzyme]-L-cysteine + [acceptor protein]-L-lysine = [E2 ubiquitin-conjugating enzyme]-L-cysteine + N(6)-ubiquitinyl-[acceptor protein]-L-lysine.. Functionally, effector proteins function to alter host cell physiology and promote bacterial survival in host tissues. This protein is an E3 ubiquitin ligase that interferes with host's ubiquitination pathway. Acts in conjunction with host E2 ubiquitin-conjugating enzymes UBE2D1 (UBCH5A) or UBE2D3 (UBCH5C), and mediates polyubiquitination of host kinase CLK1. This is E3 ubiquitin-protein ligase LubX (lubX) from Legionella pneumophila subsp. pneumophila (strain Philadelphia 1 / ATCC 33152 / DSM 7513).